We begin with the raw amino-acid sequence, 300 residues long: Probable alpha-L-glutamate ligase (300 aa).

Residues leucine 104–glutamate 287 enclose the ATP-grasp domain. ATP contacts are provided by residues lysine 141, glutamate 178 to tyrosine 179, aspartate 187, and arginine 211 to asparagine 213. Mg(2+)-binding residues include aspartate 248, glutamate 260, and asparagine 262. Aspartate 248, glutamate 260, and asparagine 262 together coordinate Mn(2+).

This sequence belongs to the RimK family. Mg(2+) is required as a cofactor. Requires Mn(2+) as cofactor.

This Enterobacter sp. (strain 638) protein is Probable alpha-L-glutamate ligase.